The sequence spans 231 residues: MSKLITTEPLKSMAEVISNYVIQRESFSARNILNKNSLVKKEIRYDLEVPTSADSIWSVYSCPDIPRLLRDVLLPGVFQKLDVIEGNGGVGTVLDIVFPPGAVPRSYKEKFVNINHEKRLKEVIMIEGGYLDMGCTFYMDRIHIFEKTPNSCVIESSIIYEVKEEYAGKMAKLITTEPLESMAEVISGYVLKKRLQVFGFEIKPKLRFNLLLCLIICLVIAGGMFVAGVPL.

A dopamine-binding site is contributed by 107 to 109; that stretch reads YKE. K121 (proton donor) is an active-site residue. Position 140 (D140) interacts with (4-hydroxyphenyl)acetaldehyde. A helical membrane pass occupies residues 210-230; it reads LLLCLIICLVIAGGMFVAGVP.

Belongs to the BetVI family. In terms of tissue distribution, expressed in roots, stems and leaves. Detected in flower buds and germinating seeds. Low expression in carpels. Restricted to sieve elements of the phloem adjacent or proximal to laticifers.

The protein localises to the endoplasmic reticulum membrane. Its subcellular location is the vacuole membrane. It carries out the reaction (4-hydroxyphenyl)acetaldehyde + dopamine = (S)-norcoclaurine + H2O. It functions in the pathway alkaloid biosynthesis; (S)-reticuline biosynthesis. Activity doubles within 5 hours of elicitor treatment and continues to increase for at least 80 hours. Functionally, involved in the biosynthesis of (S)-coclaurine, the common precursor of all benzylisoquinoline alkaloids such as morphine, sanguinarine, codeine or papaverine. Condenses dopamine and 4-hydroxyphenylacetaldehyde. The sequence is that of S-norcoclaurine synthase 2 from Papaver somniferum (Opium poppy).